Consider the following 378-residue polypeptide: Putative F-box protein At5g51000 (378 aa).

The 47-residue stretch at 1-47 (MSTMSDLFPDLVEEILSRVPITSLKAVKLTCKQWNDLSKDSSFTKNH) folds into the F-box domain.

The sequence is that of Putative F-box protein At5g51000 from Arabidopsis thaliana (Mouse-ear cress).